A 238-amino-acid polypeptide reads, in one-letter code: tRNA (guanine-N(7)-)-methyltransferase (238 aa).

S-adenosyl-L-methionine is bound by residues Glu68, Glu93, Asp120, and Asp143. The active site involves Asp143. Substrate contacts are provided by residues Lys147, Asp179, and 216 to 219 (TKFE).

This sequence belongs to the class I-like SAM-binding methyltransferase superfamily. TrmB family.

It catalyses the reaction guanosine(46) in tRNA + S-adenosyl-L-methionine = N(7)-methylguanosine(46) in tRNA + S-adenosyl-L-homocysteine. Its pathway is tRNA modification; N(7)-methylguanine-tRNA biosynthesis. Its function is as follows. Catalyzes the formation of N(7)-methylguanine at position 46 (m7G46) in tRNA. The polypeptide is tRNA (guanine-N(7)-)-methyltransferase (Stutzerimonas stutzeri (strain A1501) (Pseudomonas stutzeri)).